A 262-amino-acid chain; its full sequence is Serine O-acetyltransferase (262 aa).

The active-site Acyl-thioester intermediate is the cysteine 107. Position 128 (lysine 128) interacts with substrate. Catalysis depends on histidine 200, which acts as the Proton acceptor. Glutamate 202 is an active-site residue. Arginine 214 is a binding site for substrate.

This sequence belongs to the MetA family.

The protein resides in the cytoplasm. The enzyme catalyses L-serine + acetyl-CoA = O-acetyl-L-serine + CoA. The catalysed reaction is L-homoserine + acetyl-CoA = O-acetyl-L-homoserine + CoA. Its pathway is amino-acid biosynthesis; L-cysteine biosynthesis; L-cysteine from L-serine: step 1/2. Transfers an acetyl group from acetyl-CoA to L-serine, forming acetyl-L-serine. In vitro, also has homoserine acetyl transferase activity. This chain is Serine O-acetyltransferase, found in Lactobacillus acidophilus.